The sequence spans 185 residues: Ribosome-recycling factor (185 aa).

Belongs to the RRF family.

The protein resides in the cytoplasm. Responsible for the release of ribosomes from messenger RNA at the termination of protein biosynthesis. May increase the efficiency of translation by recycling ribosomes from one round of translation to another. The chain is Ribosome-recycling factor from Shewanella halifaxensis (strain HAW-EB4).